Consider the following 1609-residue polypeptide: MRGSHRAAPALRPRGRLWPVLAVLAAAAAAGCAQAAMDECTDEGGRPQRCMPEFVNAAFNVTVVATNTCGTPPEEYCVQTGVTGVTKSCHLCDAGQPHLQHGAAFLTDYNNQADTTWWQSQTMLAGVQYPSSINLTLHLGKAFDITYVRLKFHTSRPESFAIYKRTREDGPWIPYQYYSGSCENTYSKANRGFIRTGGDEQQALCTDEFSDISPLTGGNVAFSTLEGRPSAYNFDNSPVLQEWVTATDIRVTLNRLNTFGDEVFNDPKVLKSYYYAISDFAVGGRCKCNGHASECMKNEFDKLVCNCKHNTYGVDCEKCLPFFNDRPWRRATAESASECLPCDCNGRSQECYFDPELYRSTGHGGHCTNCQDNTDGAHCERCRENFFRLGNNEACSSCHCSPVGSLSTQCDSYGRCSCKPGVMGDKCDRCQPGFHSLTEAGCRPCSCDPSGSIDECNIETGRCVCKDNVEGFNCERCKPGFFNLESSNPRGCTPCFCFGHSSVCTNAVGYSVYSISSTFQIDEDGWRAEQRDGSEASLEWSSERQDIAVISDSYFPRYFIAPAKFLGKQVLSYGQNLSFSFRVDRRDTRLSAEDLVLEGAGLRVSVPLIAQGNSYPSETTVKYVFRLHEATDYPWRPALTPFEFQKLLNNLTSIKIRGTYSERSAGYLDDVTLASARPGPGVPATWVESCTCPVGYGGQFCEMCLSGYRRETPNLGPYSPCVLCACNGHSETCDPETGVCNCRDNTAGPHCEKCSDGYYGDSTAGTSSDCQPCPCPGGSSCAVVPKTKEVVCTNCPTGTTGKRCELCDDGYFGDPLGRNGPVRLCRLCQCSDNIDPNAVGNCNRLTGECLKCIYNTAGFYCDRCKDGFFGNPLAPNPADKCKACNCNLYGTMKQQSSCNPVTGQCECLPHVTGQDCGACDPGFYNLQSGQGCERCDCHALGSTNGQCDIRTGQCECQPGITGQHCERCEVNHFGFGPEGCKPCDCHPEGSLSLQCKDDGRCECREGFVGNRCDQCEENYFYNRSWPGCQECPACYRLVKDKVADHRVKLQELESLIANLGTGDEMVTDQAFEDRLKEAEREVMDLLREAQDVKDVDQNLMDRLQRVNNTLSSQISRLQNIRNTIEETGNLAEQARAHVENTERLIEIASRELEKAKVAAANVSVTQPESTGDPNNMTLLAEEARKLAERHKQEADDIVRVAKTANDTSTEAYNLLLRTLAGENQTAFEIEELNRKYEQAKNISQDLEKQAARVHEEAKRAGDKAVEIYASVAQLSPLDSETLENEANNIKMEAENLEQLIDQKLKDYEDLREDMRGKELEVKNLLEKGKTEQQTADQLLARADAAKALAEEAAKKGRDTLQEANDILNNLKDFDRRVNDNKTAAEEALRKIPAINQTITEANEKTREAQQALGSAAADATEAKNKAHEAERIASAVQKNATSTKAEAERTFAEVTDLDNEVNNMLKQLQEAEKELKRKQDDADQDMMMAGMASQAAQEAEINARKAKNSVTSLLSIINDLLEQLGQLDTVDLNKLNEIEGTLNKAKDEMKVSDLDRKVSDLENEAKKQEAAIMDYNRDIEEIMKDIRNLEDIRKTLPSGCFNTPSIEKP.

The N-terminal stretch at 1–33 (MRGSHRAAPALRPRGRLWPVLAVLAAAAAAGCA) is a signal peptide. A Laminin N-terminal domain is found at 46–285 (RPQRCMPEFV…AISDFAVGGR (240 aa)). Asn60 and Asn134 each carry an N-linked (GlcNAc...) asparagine glycan. Intrachain disulfides connect Cys286/Cys295, Cys288/Cys305, Cys307/Cys316, Cys319/Cys339, Cys342/Cys351, Cys344/Cys367, Cys370/Cys379, Cys382/Cys395, Cys398/Cys410, Cys400/Cys416, Cys418/Cys427, Cys430/Cys442, Cys445/Cys456, Cys447/Cys463, Cys465/Cys474, and Cys477/Cys492. Laminin EGF-like domains lie at 286 to 341 (CKCN…ECLP), 342 to 397 (CDCN…ACSS), 398 to 444 (CHCS…GCRP), and 445 to 494 (CSCD…GCTP). In terms of domain architecture, Laminin EGF-like 5; first part spans 495–504 (CFCFGHSSVC). Residues 514 to 689 (SISSTFQIDE…PGVPATWVES (176 aa)) enclose the Laminin IV type A domain. Asn576 and Asn650 each carry an N-linked (GlcNAc...) asparagine glycan. The Laminin EGF-like 5; second part domain maps to 690–723 (CTCPVGYGGQFCEMCLSGYRRETPNLGPYSPCVL). 24 cysteine pairs are disulfide-bonded: Cys724-Cys733, Cys726-Cys740, Cys742-Cys751, Cys754-Cys770, Cys773-Cys781, Cys775-Cys792, Cys795-Cys804, Cys807-Cys825, Cys828-Cys842, Cys830-Cys849, Cys852-Cys861, Cys864-Cys881, Cys884-Cys898, Cys886-Cys905, Cys907-Cys916, Cys919-Cys932, Cys935-Cys947, Cys937-Cys954, Cys956-Cys965, Cys968-Cys980, Cys983-Cys995, Cys985-Cys1001, Cys1003-Cys1012, and Cys1015-Cys1028. 6 Laminin EGF-like domains span residues 724-772 (CACN…DCQP), 773-827 (CPCP…LCRL), 828-883 (CQCS…KCKA), 884-934 (CNCN…GCER), 935-982 (CDCH…GCKP), and 983-1030 (CDCH…GCQE). N-linked (GlcNAc...) asparagine glycans are attached at residues Asn1022 and Asn1107. The interval 1030–1609 (ECPACYRLVK…CFNTPSIEKP (580 aa)) is domain II and I. Residues 1038–1609 (VKDKVADHRV…CFNTPSIEKP (572 aa)) are a coiled coil. Residue Ser1149 is modified to Phosphoserine; by FAM20C. 8 N-linked (GlcNAc...) asparagine glycosylation sites follow: Asn1161, Asn1175, Asn1205, Asn1223, Asn1241, Asn1380, Asn1395, and Asn1439. The residue at position 1493 (Ser1493) is a Phosphoserine.

As to quaternary structure, laminin is a complex glycoprotein, consisting of three different polypeptide chains (alpha, beta, gamma), which are bound to each other by disulfide bonds into a cross-shaped molecule comprising one long and three short arms with globules at each end. Gamma-1 is a subunit of laminin-1 (laminin-111 or EHS laminin), laminin-2 (laminin-211 or merosin), laminin-3 (laminin-121 or S-laminin), laminin-4 (laminin-221 or S-merosin), laminin-6 (laminin-311 or K-laminin), laminin-7 (laminin-321 or KS-laminin), laminin-8 (laminin-411), laminin-9 (laminin-421), laminin-10 (laminin-511) and laminin-11 (laminin-521). Interacts with SVEP1. Found in the basement membranes (major component).

Its subcellular location is the secreted. It localises to the extracellular space. The protein resides in the extracellular matrix. It is found in the basement membrane. Its function is as follows. Binding to cells via a high affinity receptor, laminin is thought to mediate the attachment, migration and organization of cells into tissues during embryonic development by interacting with other extracellular matrix components. In Homo sapiens (Human), this protein is Laminin subunit gamma-1.